We begin with the raw amino-acid sequence, 379 residues long: ATP phosphoribosyltransferase regulatory subunit (379 aa).

The protein belongs to the class-II aminoacyl-tRNA synthetase family. HisZ subfamily. In terms of assembly, heteromultimer composed of HisG and HisZ subunits.

It is found in the cytoplasm. Its pathway is amino-acid biosynthesis; L-histidine biosynthesis; L-histidine from 5-phospho-alpha-D-ribose 1-diphosphate: step 1/9. Functionally, required for the first step of histidine biosynthesis. May allow the feedback regulation of ATP phosphoribosyltransferase activity by histidine. The protein is ATP phosphoribosyltransferase regulatory subunit of Caldanaerobacter subterraneus subsp. tengcongensis (strain DSM 15242 / JCM 11007 / NBRC 100824 / MB4) (Thermoanaerobacter tengcongensis).